Reading from the N-terminus, the 170-residue chain is Zinc finger matrin-type protein 5 (170 aa).

The segment at 51–79 (EQNKRPCRKFLLTGQCDFGSNCRFSHMSE) adopts a C3H1-type zinc-finger fold. A disordered region spans residues 150–170 (PPSLRAPPPGGWPLQPRVQWG).

In terms of assembly, component of the U11/U12 snRNPs that are part of the U12-type spliceosome. Not found in the major spliceosome.

It is found in the nucleus. This Homo sapiens (Human) protein is Zinc finger matrin-type protein 5 (ZMAT5).